Consider the following 495-residue polypeptide: MSDARDNDDRVDFEEGSYSEMEDEVEEEQVEEYEEEEEEDDDDDDVGNQNAEEREVEDYGDTKGGDMEDVQEEIAEDDDNHIDIETADDDEKPPSPIDDEDREKYSHLLSLPPHGSEVFIGGLPRDVGEEDLRDLCEEIGEIFEVRLMKDRDSGDSKGYAFVAFKTKDVAQKAIEELHSKEFKGKTIRCSLSETKNRLFIGNIPKNWTEDEFRKVIEDVGPGVENIELIKDPTNTTRNRGFAFVLYYNNACADYSRQKMIDSNFKLEGNAPTVTWADPKSSPEHSAAAAQVKALYVKNIPENTSTEQLKELFQRHGEVTKIVTPPGKGGKRDFGFVHYAERSSALKAVKDTERYEVNGQPLEVVLAKPQAERKHDPSSYSYGAAPTPAPFVHPTFGGFAAAPYGAMGAGLGIAGSFSQPMIYGRGAMPTGMQMVPMLLPDGRVGYVLQQPGMPMAAAPPQRPRRNDRNNGSSGGSGRDNSHEHDGNRGGRRYRPY.

Positions 1–10 (MSDARDNDDR) are enriched in basic and acidic residues. Positions 1–101 (MSDARDNDDR…KPPSPIDDED (101 aa)) are disordered. Composition is skewed to acidic residues over residues 11 to 46 (VDFEEGSYSEMEDEVEEEQVEEYEEEEEEDDDDDDV) and 67 to 101 (MEDVQEEIAEDDDNHIDIETADDDEKPPSPIDDED). 3 consecutive RRM domains span residues 116 to 194 (SEVF…LSET), 196 to 278 (NRLF…WADP), and 292 to 368 (KALY…LAKP). The disordered stretch occupies residues 452-495 (MPMAAAPPQRPRRNDRNNGSSGGSGRDNSHEHDGNRGGRRYRPY). A compositionally biased stretch (basic and acidic residues) spans 478–487 (DNSHEHDGNR).

Interacts with LHP1 in the nucleus on a common set of chromatin regions. Predominantly expressed in vascular and meristematic tissues. Expressed throughout development in seedlings, roots, leaves, floral buds and siliques.

It localises to the nucleus. It is found in the cytoplasm. The protein resides in the microsome. In terms of biological role, transcriptional activator that binds DNA on GAGA-like motif and 5'-(C/G)ACGTG(G/T)C(A/G)-3' consensus motif in the promoters of target genes. Component of ribonucleosomes, which are complexes of at least 20 other different heterogeneous nuclear ribonucleoproteins (hnRNP). hnRNP play an important role in processing of precursor mRNA in the nucleus. Required during flower development and for cell fate determination. Acts both as an antagonist and as a promoter of polycomb LHP1 gene regulation activity, depending of target genes, to regulate the transcription of stress-responsive and flowering genes. May regulate histone H3 trimethylation on lysine 27 (H3K27me3). Recognizes and binds histone H3 tails methylated at 'Lys-4' (H3K4me) and acetylated at 'Lys-9' (H3K9ac), leading to epigenetic activation. When in complex with LHP1, recognizes and binds histone H3 tails methylated at 'Lys-4' (H3K4me) and 'Lys-27' (H3K27me), mostly corresponding to stress-responsive genes. May function as a suppressor of cell-autonomous immune responses involving glucosinolates, salicylic acid (SA) and jasmonic acid (JA) pathways toward pathogenic bacteria and fungi. The protein is Heterogeneous nuclear ribonucleoprotein Q of Arabidopsis thaliana (Mouse-ear cress).